A 490-amino-acid polypeptide reads, in one-letter code: Lysine--tRNA ligase (490 aa).

Mg(2+) contacts are provided by Glu400 and Glu407.

This sequence belongs to the class-II aminoacyl-tRNA synthetase family. In terms of assembly, homodimer. Mg(2+) serves as cofactor.

Its subcellular location is the cytoplasm. It catalyses the reaction tRNA(Lys) + L-lysine + ATP = L-lysyl-tRNA(Lys) + AMP + diphosphate. This is Lysine--tRNA ligase (lysS) from Mycoplasma genitalium (strain ATCC 33530 / DSM 19775 / NCTC 10195 / G37) (Mycoplasmoides genitalium).